We begin with the raw amino-acid sequence, 338 residues long: NAD kinase (338 aa).

Aspartate 66 serves as the catalytic Proton acceptor. NAD(+) contacts are provided by residues 66-67, arginine 71, 141-142, lysine 152, aspartate 171, 182-187, and alanine 206; these read DG, ND, and TAYAFS. Positions 317–338 are disordered; that stretch reads GDAGVAGTEPDKPGERDGKAGA. Over residues 325–338 the composition is skewed to basic and acidic residues; the sequence is EPDKPGERDGKAGA.

Belongs to the NAD kinase family. The cofactor is a divalent metal cation.

It is found in the cytoplasm. It catalyses the reaction NAD(+) + ATP = ADP + NADP(+) + H(+). Involved in the regulation of the intracellular balance of NAD and NADP, and is a key enzyme in the biosynthesis of NADP. Catalyzes specifically the phosphorylation on 2'-hydroxyl of the adenosine moiety of NAD to yield NADP. This chain is NAD kinase, found in Bifidobacterium longum subsp. infantis (strain ATCC 15697 / DSM 20088 / JCM 1222 / NCTC 11817 / S12).